Here is a 538-residue protein sequence, read N- to C-terminus: Bifunctional purine biosynthesis protein PurH (538 aa).

The MGS-like domain maps to 8–158 (IPAPDLVPVR…KNHAYVAIVT (151 aa)).

This sequence belongs to the PurH family.

It carries out the reaction (6R)-10-formyltetrahydrofolate + 5-amino-1-(5-phospho-beta-D-ribosyl)imidazole-4-carboxamide = 5-formamido-1-(5-phospho-D-ribosyl)imidazole-4-carboxamide + (6S)-5,6,7,8-tetrahydrofolate. It catalyses the reaction IMP + H2O = 5-formamido-1-(5-phospho-D-ribosyl)imidazole-4-carboxamide. It participates in purine metabolism; IMP biosynthesis via de novo pathway; 5-formamido-1-(5-phospho-D-ribosyl)imidazole-4-carboxamide from 5-amino-1-(5-phospho-D-ribosyl)imidazole-4-carboxamide (10-formyl THF route): step 1/1. Its pathway is purine metabolism; IMP biosynthesis via de novo pathway; IMP from 5-formamido-1-(5-phospho-D-ribosyl)imidazole-4-carboxamide: step 1/1. The protein is Bifunctional purine biosynthesis protein PurH of Mesorhizobium japonicum (strain LMG 29417 / CECT 9101 / MAFF 303099) (Mesorhizobium loti (strain MAFF 303099)).